Reading from the N-terminus, the 228-residue chain is ATP synthase subunit a (228 aa).

6 helical membrane passes run 14 to 34 (YFLL…WLFF), 71 to 91 (WVPI…LGLL), 101 to 121 (ISLT…LGFY), 139 to 159 (FLLP…PIAL), 165 to 185 (ANLT…WVLM), and 188 to 208 (VAIA…EIGV).

This sequence belongs to the ATPase A chain family. F-type ATPases have 2 components, CF(1) - the catalytic core - and CF(0) - the membrane proton channel. CF(1) has five subunits: alpha(3), beta(3), gamma(1), delta(1), epsilon(1). CF(0) has three main subunits: a, b and c.

The protein resides in the mitochondrion inner membrane. Its function is as follows. Mitochondrial membrane ATP synthase (F(1)F(0) ATP synthase or Complex V) produces ATP from ADP in the presence of a proton gradient across the membrane which is generated by electron transport complexes of the respiratory chain. F-type ATPases consist of two structural domains, F(1) - containing the extramembraneous catalytic core and F(0) - containing the membrane proton channel, linked together by a central stalk and a peripheral stalk. During catalysis, ATP synthesis in the catalytic domain of F(1) is coupled via a rotary mechanism of the central stalk subunits to proton translocation. Key component of the proton channel; it may play a direct role in the translocation of protons across the membrane. The polypeptide is ATP synthase subunit a (ATP6) (Pisaster ochraceus (Ochre sea star)).